A 282-amino-acid chain; its full sequence is Probable endonuclease 4 (282 aa).

Residues H66, H106, E143, D176, H179, H213, D226, H228, and E258 each contribute to the Zn(2+) site.

It belongs to the AP endonuclease 2 family. Requires Zn(2+) as cofactor.

It catalyses the reaction Endonucleolytic cleavage to 5'-phosphooligonucleotide end-products.. Endonuclease IV plays a role in DNA repair. It cleaves phosphodiester bonds at apurinic or apyrimidinic (AP) sites, generating a 3'-hydroxyl group and a 5'-terminal sugar phosphate. The sequence is that of Probable endonuclease 4 from Aquifex aeolicus (strain VF5).